The primary structure comprises 179 residues: Large ribosomal subunit protein uL6c (179 aa).

This sequence belongs to the universal ribosomal protein uL6 family. As to quaternary structure, part of the 50S ribosomal subunit.

It is found in the plastid. Its subcellular location is the cyanelle. Functionally, binds 23S rRNA. The polypeptide is Large ribosomal subunit protein uL6c (rpl6) (Cyanophora paradoxa).